A 428-amino-acid polypeptide reads, in one-letter code: C4-dicarboxylate transport protein (428 aa).

9 helical membrane passes run 8 to 28, 44 to 64, 76 to 96, 142 to 162, 184 to 204, 222 to 242, 289 to 309, 326 to 346, and 352 to 372; these read SLYVQVLTAIAIGILLGHFYP, LIKMVIAPVIFCTVVTGIAGM, VALLYFEVVSTIALIIGLIIV, IGAFASGNILQVLLFAVLFGF, VIFGIINMIMRLAPIGAFGAM, LIICFYITCILFVVVVLGSIA, VVGLVIPTGYSFNLDGTSIYL, IFHQITLLVVLLLSSKGAAGV, and IVLAATISAVGHLPVAGLALI.

Belongs to the dicarboxylate/amino acid:cation symporter (DAACS) (TC 2.A.23) family.

Its subcellular location is the cell inner membrane. Its function is as follows. Responsible for the transport of dicarboxylates such as succinate, fumarate, and malate from the periplasm across the membrane. This Klebsiella pneumoniae (strain 342) protein is C4-dicarboxylate transport protein.